Consider the following 146-residue polypeptide: uncharacterized protein (146 aa).

This is an uncharacterized protein from Thermoproteus tenax virus 1 (strain KRA1) (TTV1).